The chain runs to 538 residues: Thiamine transport system permease protein ThiP (538 aa).

12 helical membrane passes run V19–L39, L57–L77, L97–Y117, L141–L161, F202–G222, L242–L262, I293–S313, L337–L357, A376–L396, L406–L426, Y466–G486, and A509–T529. The region spanning I58 to T263 is the ABC transmembrane type-1 1 domain. An ABC transmembrane type-1 2 domain is found at L333–H528.

Belongs to the binding-protein-dependent transport system permease family. CysTW subfamily. As to quaternary structure, the complex is composed of two ATP-binding proteins (ThiQ), two transmembrane proteins (ThiP) and a solute-binding protein (ThiB).

The protein localises to the cell inner membrane. Its function is as follows. Part of the ABC transporter complex ThiBPQ involved in thiamine import. Probably responsible for the translocation of the substrate across the membrane. This chain is Thiamine transport system permease protein ThiP (thiP), found in Haemophilus influenzae (strain ATCC 51907 / DSM 11121 / KW20 / Rd).